The following is a 257-amino-acid chain: MLILISPAKTLDYQSPLATTRYTQPELLDHSQQLIQQARQLSAPQISRLMGISDKLADLNATRFHDWQPHFTPDNARQAILAFKGDVYTGLQAETFNDADFDFAQQHLRMLSGLYGVLRPLDLMQPYRLEMGIRLENPRGKDLYQFWGDIITDKLNEALEAQGDRVVVNLASEEYFKSVKPKKLNAELIKPVFLDEKNGKFKVVSFYAKKARGLMSRFIIENRLTKPEQLTAFDREGYFFDEETSTQDELVFKRYEQ.

The protein belongs to the UPF0246 family.

In Salmonella choleraesuis (strain SC-B67), this protein is UPF0246 protein YaaA.